The following is a 673-amino-acid chain: Inactive polyglycylase TTLL10 (673 aa).

Residues 1 to 132 are disordered; the sequence is MDHSCTRFIH…ADSDDTNAAG (132 aa). Residues 8–36 are compositionally biased toward basic residues; that stretch reads FIHRRGPPTRTRAGFKRGKRPRIQQRPRA. Residues 52–62 show a composition bias toward pro residues; sequence ASQPGPCPAPG. Residues 89 to 105 are compositionally biased toward basic and acidic residues; that stretch reads PDHDADGHCGPDLEGAE. Positions 155-552 constitute a TTL domain; sequence PGPFFYIGGS…TFRKSLRGQK (398 aa). ATP contacts are provided by residues 362–365, lysine 375, and aspartate 377; that span reads QRYI. Positions 569–673 are disordered; it reads EADPRPHLGG…EREEPENARP (105 aa). A compositionally biased stretch (pro residues) spans 612 to 627; sequence PAPPPLVPQRPRPPGP. Residues 661-673 are compositionally biased toward basic and acidic residues; the sequence is AKEEREEPENARP.

In terms of biological role, inactive polyglycylase. This chain is Inactive polyglycylase TTLL10, found in Homo sapiens (Human).